The chain runs to 356 residues: TPR repeat-containing protein P27G11.02 (356 aa).

The transit peptide at Met1 to Arg20 directs the protein to the mitochondrion. TPR repeat units follow at residues Ser194–Asn227 and Ala290–Asp323.

The protein localises to the mitochondrion. In Schizosaccharomyces pombe (strain 972 / ATCC 24843) (Fission yeast), this protein is TPR repeat-containing protein P27G11.02.